Reading from the N-terminus, the 246-residue chain is MYTRYSYNPSLGRTYVYDNKYYKNLGAVIKNANRKKHFIEHELEEKTLDPLDRYLVAEDPFLGPGKNQKLTLFKEIRNVKPDTMKLVVNWSGKEFLRETWTRFMEDSFPIVNDQEVMDVFLVINMRPTRPNRCYKFLAQHALRCDPEYVPHEVIRIVEPSYVGSNNEYRVSLAKRGGGCPVMNLHSEYTNSFEEFINRVIWENFYKPIVYVGTDSAEEEEILLEVSLVFKIKEFAPDAPLYNGPAY.

This sequence belongs to the polyhedrin family.

Its function is as follows. Major component of the virus occlusion bodies, which are large proteinaceous structures (polyhedra), that protect the virus from the outside environment for extended periods until they are ingested by insect larvae. This chain is Polyhedrin (PH), found in Lepidoptera (butterflies and moths).